The primary structure comprises 139 residues: Transthyretin-like protein 5 (139 aa).

The N-terminal stretch at 1 to 15 is a signal peptide; that stretch reads MKLIILLCLVASSYA.

The protein belongs to the nematode transthyretin-like family.

It localises to the secreted. The protein is Transthyretin-like protein 5 (ttr-5) of Caenorhabditis elegans.